Here is a 160-residue protein sequence, read N- to C-terminus: Protein BOLA1, chloroplastic (160 aa).

A chloroplast-targeting transit peptide spans 1 to 50 (MFSSSIRLIVSGFHRTQPLKSPVNSPSVFISVPKFFNSESKSTGTGSRSV). Residues 39 to 61 (ESKSTGTGSRSVAMSSVEKTGSD) are compositionally biased toward polar residues. Residues 39–66 (ESKSTGTGSRSVAMSSVEKTGSDSGAIE) are disordered.

This sequence belongs to the bolA/yrbA family. As to quaternary structure, interacts in vitro with GRXS14, GRXS15, GRXS16 and GRXS17, but not with GRXC5. Interacts in vivo only with GRXS14 and GRXS16.

It localises to the plastid. The protein resides in the chloroplast. May act either alone or in interaction with glutaredoxin as a redox-regulated transcriptional regulator, or as a factor regulating Fe-S cluster biogenesis. The glutaredoxin-BOLA1 heterodimers bind a labile, oxygen sensitive iron-sulfur cluster. The chain is Protein BOLA1, chloroplastic from Arabidopsis thaliana (Mouse-ear cress).